Here is a 333-residue protein sequence, read N- to C-terminus: DNA-directed RNA polymerase subunit alpha (333 aa).

Residues 1–233 are alpha N-terminal domain (alpha-NTD); sequence MVREKVKVST…NLFIPFLHVE (233 aa). An alpha C-terminal domain (alpha-CTD) region spans residues 267 to 333; it reads LVFQYIFIDQ…LEKNRKFISN (67 aa).

The protein belongs to the RNA polymerase alpha chain family. In plastids the minimal PEP RNA polymerase catalytic core is composed of four subunits: alpha, beta, beta', and beta''. When a (nuclear-encoded) sigma factor is associated with the core the holoenzyme is formed, which can initiate transcription.

It localises to the plastid. The protein resides in the chloroplast. The catalysed reaction is RNA(n) + a ribonucleoside 5'-triphosphate = RNA(n+1) + diphosphate. Functionally, DNA-dependent RNA polymerase catalyzes the transcription of DNA into RNA using the four ribonucleoside triphosphates as substrates. This is DNA-directed RNA polymerase subunit alpha from Aethionema grandiflorum (Persian stone-cress).